The chain runs to 1465 residues: DNA polymerase III polC-type (1465 aa).

In terms of domain architecture, Exonuclease spans 427–583; sequence YVVFDVETTG…YDAEATGRLL (157 aa).

It belongs to the DNA polymerase type-C family. PolC subfamily.

The protein localises to the cytoplasm. The enzyme catalyses DNA(n) + a 2'-deoxyribonucleoside 5'-triphosphate = DNA(n+1) + diphosphate. Functionally, required for replicative DNA synthesis. This DNA polymerase also exhibits 3' to 5' exonuclease activity. This Streptococcus pyogenes serotype M3 (strain ATCC BAA-595 / MGAS315) protein is DNA polymerase III polC-type.